Consider the following 310-residue polypeptide: Pantothenate kinase (310 aa).

Position 95–102 (95–102 (GSVAVGKS)) interacts with ATP.

It belongs to the prokaryotic pantothenate kinase family.

The protein resides in the cytoplasm. It carries out the reaction (R)-pantothenate + ATP = (R)-4'-phosphopantothenate + ADP + H(+). It functions in the pathway cofactor biosynthesis; coenzyme A biosynthesis; CoA from (R)-pantothenate: step 1/5. This Mycobacteroides abscessus (strain ATCC 19977 / DSM 44196 / CCUG 20993 / CIP 104536 / JCM 13569 / NCTC 13031 / TMC 1543 / L948) (Mycobacterium abscessus) protein is Pantothenate kinase.